Consider the following 132-residue polypeptide: MTMPTKSFHRTDRVSAQVRRDLGTIVHAAVRDHGLPSVSVSDVEISRDLAHAKVFVTALQQERSAEAVKGLKEIAGQLRTQLARAMKLRHVPELHFHYDDSVDRGERIDNLLRDLDDIGPEAAPDAQDAEPR.

This sequence belongs to the RbfA family. As to quaternary structure, monomer. Binds 30S ribosomal subunits, but not 50S ribosomal subunits or 70S ribosomes.

The protein resides in the cytoplasm. Functionally, one of several proteins that assist in the late maturation steps of the functional core of the 30S ribosomal subunit. Associates with free 30S ribosomal subunits (but not with 30S subunits that are part of 70S ribosomes or polysomes). Required for efficient processing of 16S rRNA. May interact with the 5'-terminal helix region of 16S rRNA. The protein is Ribosome-binding factor A of Xanthomonas campestris pv. campestris (strain 8004).